Consider the following 169-residue polypeptide: Protein-export protein SecB (169 aa).

This sequence belongs to the SecB family. As to quaternary structure, homotetramer, a dimer of dimers. One homotetramer interacts with 1 SecA dimer.

It localises to the cytoplasm. Functionally, one of the proteins required for the normal export of preproteins out of the cell cytoplasm. It is a molecular chaperone that binds to a subset of precursor proteins, maintaining them in a translocation-competent state. It also specifically binds to its receptor SecA. The chain is Protein-export protein SecB from Pseudoalteromonas atlantica (strain T6c / ATCC BAA-1087).